The chain runs to 86 residues: Cell division topological specificity factor (86 aa).

Belongs to the MinE family.

Its function is as follows. Prevents the cell division inhibition by proteins MinC and MinD at internal division sites while permitting inhibition at polar sites. This ensures cell division at the proper site by restricting the formation of a division septum at the midpoint of the long axis of the cell. The polypeptide is Cell division topological specificity factor (Shewanella piezotolerans (strain WP3 / JCM 13877)).